We begin with the raw amino-acid sequence, 340 residues long: Ketol-acid reductoisomerase (NADP(+)) (340 aa).

The KARI N-terminal Rossmann domain maps to Met1 to Thr182. NADP(+) contacts are provided by residues Tyr24–Gln27, Arg48, Ser51, Ser53, and Asp83–Gln86. His108 is an active-site residue. Position 134 (Gly134) interacts with NADP(+). A KARI C-terminal knotted domain is found at Asn183–Ile329. 4 residues coordinate Mg(2+): Asp191, Glu195, Glu227, and Glu231. Ser252 contributes to the substrate binding site.

The protein belongs to the ketol-acid reductoisomerase family. Mg(2+) serves as cofactor.

The catalysed reaction is (2R)-2,3-dihydroxy-3-methylbutanoate + NADP(+) = (2S)-2-acetolactate + NADPH + H(+). The enzyme catalyses (2R,3R)-2,3-dihydroxy-3-methylpentanoate + NADP(+) = (S)-2-ethyl-2-hydroxy-3-oxobutanoate + NADPH + H(+). It participates in amino-acid biosynthesis; L-isoleucine biosynthesis; L-isoleucine from 2-oxobutanoate: step 2/4. Its pathway is amino-acid biosynthesis; L-valine biosynthesis; L-valine from pyruvate: step 2/4. Involved in the biosynthesis of branched-chain amino acids (BCAA). Catalyzes an alkyl-migration followed by a ketol-acid reduction of (S)-2-acetolactate (S2AL) to yield (R)-2,3-dihydroxy-isovalerate. In the isomerase reaction, S2AL is rearranged via a Mg-dependent methyl migration to produce 3-hydroxy-3-methyl-2-ketobutyrate (HMKB). In the reductase reaction, this 2-ketoacid undergoes a metal-dependent reduction by NADPH to yield (R)-2,3-dihydroxy-isovalerate. The polypeptide is Ketol-acid reductoisomerase (NADP(+)) (Paracoccus denitrificans (strain Pd 1222)).